The chain runs to 261 residues: uncharacterized protein (261 aa).

A signal peptide spans 1–22 (MGYLKKVGMCISLLIVIIFVTS). The N-palmitoyl cysteine moiety is linked to residue C23. The S-diacylglycerol cysteine moiety is linked to residue C23.

It belongs to the staphylococcal tandem lipoprotein family.

Its subcellular location is the cell membrane. This is an uncharacterized protein from Staphylococcus aureus (strain bovine RF122 / ET3-1).